The sequence spans 469 residues: Pup--protein ligase (469 aa).

Mg(2+) is bound at residue E9. R53 lines the ATP pocket. Y55 is a binding site for Mg(2+). D57 (proton acceptor) is an active-site residue. E63 serves as a coordination point for Mg(2+). Residues T66 and W430 each contribute to the ATP site.

Belongs to the Pup ligase/Pup deamidase family. Pup-conjugating enzyme subfamily.

It carries out the reaction ATP + [prokaryotic ubiquitin-like protein]-L-glutamate + [protein]-L-lysine = ADP + phosphate + N(6)-([prokaryotic ubiquitin-like protein]-gamma-L-glutamyl)-[protein]-L-lysine.. It functions in the pathway protein degradation; proteasomal Pup-dependent pathway. It participates in protein modification; protein pupylation. Its function is as follows. Catalyzes the covalent attachment of the prokaryotic ubiquitin-like protein modifier Pup to the proteasomal substrate proteins, thereby targeting them for proteasomal degradation. This tagging system is termed pupylation. The ligation reaction involves the side-chain carboxylate of the C-terminal glutamate of Pup and the side-chain amino group of a substrate lysine. The chain is Pup--protein ligase from Kocuria rhizophila (strain ATCC 9341 / DSM 348 / NBRC 103217 / DC2201).